The sequence spans 1088 residues: Protein unc-13 homolog D (1088 aa).

Positions 26–46 (VRDLQDPPPQATPEVQVQSHH) are disordered. The C2 1 domain occupies 92–239 (QPEEHQQMLQ…FKEARKDKGQ (148 aa)). Ca(2+)-binding residues include aspartate 127 and aspartate 133. Serine 150 carries the post-translational modification Phosphoserine. Positions 206 and 208 each coordinate Ca(2+). The tract at residues 240 to 543 (DDFLGNVMLR…AKRVQDHTAA (304 aa)) is interaction with RAB27A. Residues 557–675 (FQLYVSLREF…RLALVYCSLI (119 aa)) enclose the MHD1 domain. Residues 786-893 (EDAILPLMKF…ASSRELIQKY (108 aa)) form the MHD2 domain. One can recognise a C2 2 domain in the interval 908–1033 (RLGAVTVKAS…PGLTGCVEPG (126 aa)). Leucine 938, aspartate 939, aspartate 945, aspartate 1003, aspartate 1005, and aspartate 1011 together coordinate Ca(2+).

The protein belongs to the unc-13 family. In terms of assembly, interacts with RAB27A and DOC2A. Interacts with RhoG; the interaction increases RhoG affinity to the membrane lipids, targets Unc13d to membrane lipids and facilitates cytotoxic granule (CG) docking to the plasma membrane. Requires Ca(2+) as cofactor. Expressed in lung bronchial epithelium goblet/mucous cells. Also expressed in spleen and testis. Expressed at very low levels in heart muscle, kidney, liver, brain and skeletal muscle.

The protein localises to the cytoplasm. The protein resides in the membrane. Its subcellular location is the late endosome. It localises to the recycling endosome. It is found in the lysosome. Plays a role in cytotoxic granule exocytosis in lymphocytes. Required for both granule maturation and granule docking and priming at the immunologic synapse. Regulates assembly of recycling and late endosomal structures, leading to the formation of an endosomal exocytic compartment that fuses with perforin-containing granules at the immunologic synapse and licences them for exocytosis. Regulates Ca(2+)-dependent secretory lysosome exocytosis in mast cells. This Rattus norvegicus (Rat) protein is Protein unc-13 homolog D (Unc13d).